Here is a 124-residue protein sequence, read N- to C-terminus: Putative melanoma-associated antigen 5P (124 aa).

A compositionally biased stretch (basic and acidic residues) spans 1 to 14; the sequence is MSLEQKSQHCKPEE. 2 disordered regions span residues 1 to 69 and 82 to 103; these read MSLE…QGAS and QSIK…DPES. Positions 3 to 124 constitute an MAGE domain; it reads LEQKSQHCKP…DLIHFLLLKY (122 aa). 2 stretches are compositionally biased toward polar residues: residues 30–44 and 82–100; these read AATT…SSSP and QSIK…TSPD.

As to expression, expressed in many tumors of several types, such as melanoma, head and neck squamous cell carcinoma, lung carcinoma and breast carcinoma, but not in normal tissues except for testes.

Its function is as follows. May negatively regulates apoptosis. The chain is Putative melanoma-associated antigen 5P from Homo sapiens (Human).